A 139-amino-acid chain; its full sequence is 2S seed storage albumin protein (139 aa).

The first 15 residues, 1–15 (AALLVALLFVANAAA), serve as a signal peptide directing secretion. 11 igE-binding regions span residues 16–30 (FRTT…EDID), 29–34 (IDNPRR), 64–78 (GYDE…RQCC), 65–73 (YDEDNQRQH), 95–103 (QVVRRQQQQ), 99–111 (RQQQ…GEEM), 102–114 (QQQG…MEEM), 105–117 (GLRG…MVQS), 112–126 (EEMV…NECG), 125–136 (CGISSQRCEIRR), and 125–139 (CGIS…RSWF). 2 propeptides span residues 16–31 (FRTT…DIDN) and 58–71 (QQSR…DNQR). Disulfide bonds link cysteine 39-cysteine 88, cysteine 52-cysteine 77, cysteine 78-cysteine 125, and cysteine 90-cysteine 132. Residues 104–115 (QGLRGEEMEEMV) form an immunodominant epitope. IgE-binding; binds to IgE in 75% of the 20 walnut-allergic patients tested region. Residues 107–110 (RGEE) are minimally required for IgE-binding by the immunodominant epitope. A propeptide spanning residues 136-139 (RSWF) is cleaved from the precursor.

The protein belongs to the 2S seed storage albumins family. The mature protein consists of a small chain and a large chain linked by disulfide bonds. In terms of tissue distribution, expressed in seed (at protein level). Expressed in the peel of mature seed.

Its function is as follows. Seed storage protein. This chain is 2S seed storage albumin protein, found in Juglans regia (English walnut).